A 151-amino-acid chain; its full sequence is MEYKKIIAQNKKALFNYFIEERLEAGIVLKGSEVQSLRQGKASIEESHAADTGNEVFLYNCHIAEYEKANRFNHSTRRPRKLLLHKKEINKIIGRTKIKGYTLVALSMYFNKKNKIKIELGIAKGKKLHDKRESIKEKDWKRDQSRLIRQK.

The interval 131-151 (KRESIKEKDWKRDQSRLIRQK) is disordered.

This sequence belongs to the SmpB family.

The protein resides in the cytoplasm. Functionally, required for rescue of stalled ribosomes mediated by trans-translation. Binds to transfer-messenger RNA (tmRNA), required for stable association of tmRNA with ribosomes. tmRNA and SmpB together mimic tRNA shape, replacing the anticodon stem-loop with SmpB. tmRNA is encoded by the ssrA gene; the 2 termini fold to resemble tRNA(Ala) and it encodes a 'tag peptide', a short internal open reading frame. During trans-translation Ala-aminoacylated tmRNA acts like a tRNA, entering the A-site of stalled ribosomes, displacing the stalled mRNA. The ribosome then switches to translate the ORF on the tmRNA; the nascent peptide is terminated with the 'tag peptide' encoded by the tmRNA and targeted for degradation. The ribosome is freed to recommence translation, which seems to be the essential function of trans-translation. In Rickettsia bellii (strain OSU 85-389), this protein is SsrA-binding protein.